Consider the following 244-residue polypeptide: 1-(5-phosphoribosyl)-5-[(5-phosphoribosylamino)methylideneamino] imidazole-4-carboxamide isomerase (244 aa).

The active-site Proton acceptor is Asp10. Asp132 serves as the catalytic Proton donor.

The protein belongs to the HisA/HisF family.

The protein localises to the cytoplasm. It carries out the reaction 1-(5-phospho-beta-D-ribosyl)-5-[(5-phospho-beta-D-ribosylamino)methylideneamino]imidazole-4-carboxamide = 5-[(5-phospho-1-deoxy-D-ribulos-1-ylimino)methylamino]-1-(5-phospho-beta-D-ribosyl)imidazole-4-carboxamide. It participates in amino-acid biosynthesis; L-histidine biosynthesis; L-histidine from 5-phospho-alpha-D-ribose 1-diphosphate: step 4/9. This Xanthomonas axonopodis pv. citri (strain 306) protein is 1-(5-phosphoribosyl)-5-[(5-phosphoribosylamino)methylideneamino] imidazole-4-carboxamide isomerase.